Here is a 294-residue protein sequence, read N- to C-terminus: Fructose-bisphosphate aldolase class 1 (294 aa).

Catalysis depends on Glu-176, which acts as the Proton acceptor. Lys-213 (schiff-base intermediate with dihydroxyacetone-P) is an active-site residue.

It belongs to the class I fructose-bisphosphate aldolase family.

It carries out the reaction beta-D-fructose 1,6-bisphosphate = D-glyceraldehyde 3-phosphate + dihydroxyacetone phosphate. Its pathway is carbohydrate degradation; glycolysis; D-glyceraldehyde 3-phosphate and glycerone phosphate from D-glucose: step 4/4. This Oceanobacillus iheyensis (strain DSM 14371 / CIP 107618 / JCM 11309 / KCTC 3954 / HTE831) protein is Fructose-bisphosphate aldolase class 1.